A 724-amino-acid chain; its full sequence is Protein arginine N-methyltransferase 1.6 (724 aa).

SAM-dependent MTase PRMT-type domains lie at 61-388 (NDQP…YNLK) and 395-721 (HERT…IVTH). Catalysis depends on residues Glu183 and Glu192.

This sequence belongs to the class I-like SAM-binding methyltransferase superfamily. Protein arginine N-methyltransferase family. PRMT7 subfamily.

Functionally, arginine methyltransferase that can both catalyze the formation of omega-N monomethylarginine (MMA) and symmetrical dimethylarginine (sDMA). This Arabidopsis thaliana (Mouse-ear cress) protein is Protein arginine N-methyltransferase 1.6 (PRMT16).